Consider the following 157-residue polypeptide: Transcription elongation factor GreA (157 aa).

Positions 1 to 24 (MDKFPMTPEGYHALDEELKRRQQE) are disordered. A compositionally biased stretch (basic and acidic residues) spans 12–24 (HALDEELKRRQQE). The stretch at 53–73 (EAQSLNEGRIAELEDKLSRAE) forms a coiled coil.

The protein belongs to the GreA/GreB family.

Its function is as follows. Necessary for efficient RNA polymerase transcription elongation past template-encoded arresting sites. The arresting sites in DNA have the property of trapping a certain fraction of elongating RNA polymerases that pass through, resulting in locked ternary complexes. Cleavage of the nascent transcript by cleavage factors such as GreA or GreB allows the resumption of elongation from the new 3'terminus. GreA releases sequences of 2 to 3 nucleotides. The sequence is that of Transcription elongation factor GreA from Beijerinckia indica subsp. indica (strain ATCC 9039 / DSM 1715 / NCIMB 8712).